The sequence spans 321 residues: Probable 3-hydroxyisobutyrate dehydrogenase, mitochondrial (321 aa).

NAD(+) contacts are provided by residues K23–D52, L86–P87, and T117. The active site involves K192. K267 provides a ligand contact to NAD(+).

Belongs to the HIBADH-related family. 3-hydroxyisobutyrate dehydrogenase subfamily.

Its subcellular location is the mitochondrion. The catalysed reaction is 3-hydroxy-2-methylpropanoate + NAD(+) = 2-methyl-3-oxopropanoate + NADH + H(+). It participates in amino-acid degradation; L-valine degradation. The polypeptide is Probable 3-hydroxyisobutyrate dehydrogenase, mitochondrial (hibA) (Dictyostelium discoideum (Social amoeba)).